The sequence spans 663 residues: DNA topoisomerase 4 subunit B (663 aa).

Residues tyrosine 21, asparagine 61, aspartate 88, 130–136 (GLHGVGI), and lysine 360 contribute to the ATP site. In terms of domain architecture, Toprim spans 440–554 (TELFIVEGDS…EGHLYLAKPP (115 aa)). The Mg(2+) site is built by glutamate 446, aspartate 519, and aspartate 521.

It belongs to the type II topoisomerase family. ParE type 1 subfamily. As to quaternary structure, heterotetramer composed of ParC and ParE. Mg(2+) is required as a cofactor. The cofactor is Mn(2+). It depends on Ca(2+) as a cofactor.

The enzyme catalyses ATP-dependent breakage, passage and rejoining of double-stranded DNA.. Its function is as follows. Topoisomerase IV is essential for chromosome segregation. It relaxes supercoiled DNA. Performs the decatenation events required during the replication of a circular DNA molecule. The protein is DNA topoisomerase 4 subunit B of Rickettsia typhi (strain ATCC VR-144 / Wilmington).